Consider the following 94-residue polypeptide: Selenoprotein K (94 aa).

Residues 20–42 (LSFITDFFWGIAEFVVFFFKTLL) form a helical membrane-spanning segment. Residues 48–94 (KRRGYGGSSDSRYDDGRGPPGNPPRRMGRISHLRGPSPPPMAGGUGR) are disordered. Position 92 (Sec92) is a non-standard amino acid, selenocysteine.

Belongs to the selenoprotein K family. In terms of assembly, interacts with DERL1, DERL2, DERL3 and SELENOS. The SELENOK-SELENOS complex interacts with VCP. Interacts with ZDHHC6. Cleaved by CAPN2/m-calpain in resting macrophages but not in activated macrophages. Macrophage activation up-regulates expression of the calpain inhibitor CAST/calpastatin, resulting in inhibition of CAPN2 activity. In terms of processing, truncated SELENOK proteins produced by failed UGA/Sec decoding are ubiquitinated by the CRL2(KLHDC2) complex, which recognizes the diglycine (Gly-Gly) at the C-terminus of truncated SELENOK proteins.

Its subcellular location is the endoplasmic reticulum membrane. The protein resides in the cell membrane. Its function is as follows. Required for Ca(2+) flux in immune cells and plays a role in T-cell proliferation and in T-cell and neutrophil migration. Involved in endoplasmic reticulum-associated degradation (ERAD) of soluble glycosylated proteins. Required for palmitoylation and cell surface expression of CD36 and involved in macrophage uptake of low-density lipoprotein and in foam cell formation. Together with ZDHHC6, required for palmitoylation of ITPR1 in immune cells, leading to regulate ITPR1 stability and function. Plays a role in protection of cells from ER stress-induced apoptosis. Protects cells from oxidative stress when overexpressed in cardiomyocytes. The chain is Selenoprotein K from Rattus norvegicus (Rat).